Here is a 1969-residue protein sequence, read N- to C-terminus: Myosin-3 (1969 aa).

Positions Asp33 to Pro82 constitute a Myosin N-terminal SH3-like domain. A Myosin motor domain is found at Asp86–Asp791. Lys130 is modified (N6,N6,N6-trimethyllysine). Gly179–Thr186 provides a ligand contact to ATP. Actin-binding regions lie at residues Leu667–Glu689 and Lys770–Ala784. Positions Leu794 to Gly823 constitute an IQ domain. A coiled-coil region spans residues Lys857–Leu1969. 4 disordered regions span residues Met942–His966, Asn1006–Lys1029, Leu1131–Val1213, and Lys1234–Arg1255. 2 stretches are compositionally biased toward basic and acidic residues: residues Ala1137–Glu1164 and Ala1176–Asn1197.

It belongs to the TRAFAC class myosin-kinesin ATPase superfamily. Myosin family. As to quaternary structure, muscle myosin is a hexameric protein that consists of 2 heavy chain subunits (MHC), 2 alkali light chain subunits (MLC) and 2 regulatory light chain subunits (MLC-2). As to expression, expressed in body wall muscles, neighboring vulval muscle cells and the contractile sheath covering the hermaphrodite gonad (myoepithelial sheath cells).

It is found in the cytoplasm. Its subcellular location is the myofibril. The protein localises to the sarcomere. It localises to the a band. Its function is as follows. Essential for muscle contraction. Involved in ovulation likely by regulating the contraction of gonadal myoepithelial sheath cells. This is Myosin-3 (myo-3) from Caenorhabditis elegans.